Reading from the N-terminus, the 112-residue chain is UPF0342 protein STER_0693 (112 aa).

The protein belongs to the UPF0342 family.

In Streptococcus thermophilus (strain ATCC BAA-491 / LMD-9), this protein is UPF0342 protein STER_0693.